Reading from the N-terminus, the 1070-residue chain is DNA-directed RNA polymerase subunit beta (1070 aa).

Belongs to the RNA polymerase beta chain family. As to quaternary structure, in plastids the minimal PEP RNA polymerase catalytic core is composed of four subunits: alpha, beta, beta', and beta''. When a (nuclear-encoded) sigma factor is associated with the core the holoenzyme is formed, which can initiate transcription.

The protein localises to the plastid. It carries out the reaction RNA(n) + a ribonucleoside 5'-triphosphate = RNA(n+1) + diphosphate. Its function is as follows. DNA-dependent RNA polymerase catalyzes the transcription of DNA into RNA using the four ribonucleoside triphosphates as substrates. The protein is DNA-directed RNA polymerase subunit beta (rpoB) of Cuscuta reflexa (Southern Asian dodder).